Here is a 534-residue protein sequence, read N- to C-terminus: Phenylalanine N-monooxygenase CYP79D16 (534 aa).

Positions 1–21 are cleaved as a signal peptide; that stretch reads MEANVGFLTLCLAITLVRFLM. Residue C472 coordinates heme. An N-linked (GlcNAc...) asparagine glycan is attached at N500.

It belongs to the cytochrome P450 family. The cofactor is heme. Expressed in seedlings.

It catalyses the reaction L-phenylalanine + 2 reduced [NADPH--hemoprotein reductase] + 2 O2 = (E)-phenylacetaldehyde oxime + 2 oxidized [NADPH--hemoprotein reductase] + CO2 + 3 H2O + 2 H(+). In terms of biological role, involved in L-phenylalanine-derived cyanogenic glycoside biosynthesis, including prunasin and amygdalin defensive agents. Catalyzes the conversion of L-phenylalanine (Phe) into phenylacetaldoxime (PAOx). Cannot use tyrosine (Tyr), tryptophan (Trp) and valine (Val) as substrates. The sequence is that of Phenylalanine N-monooxygenase CYP79D16 from Prunus mume (Japanese apricot).